Consider the following 553-residue polypeptide: Zinc finger protein with KRAB and SCAN domains 3 (553 aa).

The tract at residues 28–49 (EQEESSPLAEETSWLGSPGPDR) is disordered. 2 positions are modified to phosphoserine: Ser-33 and Ser-44. One can recognise an SCAN box domain in the interval 51–133 (RQRFRAFRYP…ALLEYLDRQL (83 aa)). The residue at position 136 (Thr-136) is a Phosphothreonine. Lys-176 is covalently cross-linked (Glycyl lysine isopeptide (Lys-Gly) (interchain with G-Cter in SUMO2)). Thr-206 carries the post-translational modification Phosphothreonine. In terms of domain architecture, KRAB spans 213–273 (LKMEDVAPVL…RAEEYRDQKP (61 aa)). Ser-223 bears the Phosphoserine mark. C2H2-type zinc fingers lie at residues 313–335 (FYCR…KRIH), 341–363 (YECE…QRVH), 369–391 (YECE…QRTH), 397–419 (YECD…HRIH), and 425–447 (YQCN…QRTH). Thr-448 carries the phosphothreonine modification. 2 consecutive C2H2-type zinc fingers follow at residues 479 to 501 (YQCN…QKVH) and 507 to 529 (FECQ…QRRH).

Belongs to the krueppel C2H2-type zinc-finger protein family. In terms of tissue distribution, expressed in heart, brain, spleen, lung, liver, skeletal muscle, kidney and testis.

It is found in the nucleus. It localises to the cytoplasm. Functionally, transcriptional factor that binds to the consensus sequence 5'-[GT][AG][AGT]GGGG-3' and acts as a repressor of autophagy. Specifically represses expression of genes involved in autophagy and lysosome biogenesis/function such as MAP1LC3B, ULK1 or WIPI2. Associates with chromatin at the ITGB4 and VEGF promoters. This Mus musculus (Mouse) protein is Zinc finger protein with KRAB and SCAN domains 3 (Zkscan3).